Here is a 193-residue protein sequence, read N- to C-terminus: MEARFLKSASDLESCPQDSVKEVCFMGRSNVGKSSLINAFFQKKLAKTSATPGRTQLLNFFEYNRKRFVDLPGYGFAKLSKVQKEAITNLLTQFLNFRQNLTGVVLVIDSGVVTVQDQEVVKTILQTGLNFLVIANKFDKLNQSERFHTQNKLAHFLKVNPNKCLFVSAKTGYNLQVMHKQIFELFKADGQAI.

One can recognise an EngB-type G domain in the interval 19–188; the sequence is SVKEVCFMGR…HKQIFELFKA (170 aa). Residues 27–34, 53–57, 70–73, 136–139, and 167–169 contribute to the GTP site; these read GRSNVGKS, GRTQL, DLPG, NKFD, and VSA. Mg(2+) is bound by residues Ser-34 and Thr-55.

It belongs to the TRAFAC class TrmE-Era-EngA-EngB-Septin-like GTPase superfamily. EngB GTPase family. Requires Mg(2+) as cofactor.

In terms of biological role, necessary for normal cell division and for the maintenance of normal septation. The protein is Probable GTP-binding protein EngB of Mycoplasma pneumoniae (strain ATCC 29342 / M129 / Subtype 1) (Mycoplasmoides pneumoniae).